A 185-amino-acid polypeptide reads, in one-letter code: Large ribosomal subunit protein uL5 (185 aa).

It belongs to the universal ribosomal protein uL5 family. In terms of assembly, part of the 50S ribosomal subunit; part of the 5S rRNA/L5/L18/L25 subcomplex. Contacts the 5S rRNA and the P site tRNA. Forms a bridge to the 30S subunit in the 70S ribosome.

This is one of the proteins that bind and probably mediate the attachment of the 5S RNA into the large ribosomal subunit, where it forms part of the central protuberance. In the 70S ribosome it contacts protein S13 of the 30S subunit (bridge B1b), connecting the 2 subunits; this bridge is implicated in subunit movement. Contacts the P site tRNA; the 5S rRNA and some of its associated proteins might help stabilize positioning of ribosome-bound tRNAs. This is Large ribosomal subunit protein uL5 from Magnetococcus marinus (strain ATCC BAA-1437 / JCM 17883 / MC-1).